A 959-amino-acid polypeptide reads, in one-letter code: AP2-associated protein kinase 1 (959 aa).

N-acetylmethionine is present on methionine 1. The span at 1 to 11 shows a compositional bias: basic and acidic residues; that stretch reads MKKFFDSRREQ. Positions 1-27 are disordered; sequence MKKFFDSRREQGSSGLGSGSSGGGGSS. Serine 14 is subject to Phosphoserine. Residues 14 to 27 show a composition bias toward gly residues; it reads SGLGSGSSGGGGSS. The Protein kinase domain occupies 46-315; that stretch reads VTVDEVLAEG…QVSYFSFKLL (270 aa). ATP-binding positions include 52–60 and lysine 74; that span reads LAEGGFALV. The Proton acceptor role is filled by aspartate 176. Tyrosine 234 carries the post-translational modification Phosphotyrosine. Serine 235 carries the phosphoserine modification. The interval 340-385 is disordered; sequence SEAAVKKTQPKARLTDPIPTTETSIAPRQRPKAGQTQPNPGILPIQ. 2 positions are modified to phosphothreonine: threonine 354 and threonine 389. An Omega-N-methylarginine modification is found at arginine 391. 2 disordered regions span residues 398–514 and 578–630; these read PLPQ…AVHP and TAPQ…RAGH. Residues 404–419 are compositionally biased toward polar residues; that stretch reads GPSNQPGLLPSVSQPK. The segment covering 420-435 has biased composition (low complexity); sequence AQATPSQPLQSSQPKQ. Phosphothreonine is present on threonine 441. 3 stretches are compositionally biased toward low complexity: residues 444-481, 494-510, and 578-603; these read QTPATQTQGLPTQAQATPQHQQQHLLKQQQQQQQQPQQ, QQQQQQQQQQAQTQQFQ, and TAPQAAAAQEPGQIQAPVRQQPKVQT. Phosphothreonine is present on threonine 604. Polar residues predominate over residues 609–625; that stretch reads IQGQKVGSLTPPSSPKT. At serine 616 the chain carries Phosphoserine. Phosphothreonine is present on threonine 618. Residues serine 621, serine 622, serine 635, and serine 648 each carry the phosphoserine modification. Threonine 651 carries the post-translational modification Phosphothreonine. Disordered regions lie at residues 662–699, 727–763, 837–857, and 923–943; these read SLNKSKSATTTPSGSPRTSQQNVSNASEGSTWNPFDDD, GGSAESLIPGFQPTQGDAFTTPSFSAGTAEKRKGGQA, PVAQRLPSQTESVTSNRTDSL, and ITKNTQGGHSRNSSGSSESSL. The span at 670-694 shows a compositional bias: polar residues; that stretch reads TTTPSGSPRTSQQNVSNASEGSTWN. A Phosphoserine modification is found at serine 729. 2 stretches are compositionally biased toward polar residues: residues 738–752 and 842–857; these read QPTQGDAFTTPSFSA and LPSQTESVTSNRTDSL. Residues 821-958 form a clathrin-binding domain (CBD) region; that stretch reads DKADVAVESL…SLLLVDQLID (138 aa). Residues serine 844, serine 935, and serine 936 each carry the phosphoserine modification. Low complexity predominate over residues 929-942; it reads GGHSRNSSGSSESS.

The protein belongs to the protein kinase superfamily. Ser/Thr protein kinase family. As to quaternary structure, interacts (via CBD domain) with clathrin. Interacts with AP-2 complex. Interacts with NUMB. Interacts with alpha-adaptin. Interacts with EPS15 isoform 2. Interacts with membrane-bound activated NOTCH1 but not with the inactive full-length form of NOTCH1. Preferentially interacts with monoubiquitinated activated NOTCH1 compared to the non-ubiquitinated form. Autophosphorylated.

Its subcellular location is the cell membrane. It is found in the membrane. The protein localises to the clathrin-coated pit. The protein resides in the presynapse. The catalysed reaction is L-seryl-[protein] + ATP = O-phospho-L-seryl-[protein] + ADP + H(+). The enzyme catalyses L-threonyl-[protein] + ATP = O-phospho-L-threonyl-[protein] + ADP + H(+). Its activity is regulated as follows. Stimulated by clathrin. In terms of biological role, regulates clathrin-mediated endocytosis by phosphorylating the AP2M1/mu2 subunit of the adaptor protein complex 2 (AP-2) which ensures high affinity binding of AP-2 to cargo membrane proteins during the initial stages of endocytosis. Preferentially, may phosphorylate substrates on threonine residues. Regulates phosphorylation of other AP-2 subunits as well as AP-2 localization and AP-2-mediated internalization of ligand complexes. Phosphorylates NUMB and regulates its cellular localization, promoting NUMB localization to endosomes. Binds to and stabilizes the activated form of NOTCH1, increases its localization in endosomes and regulates its transcriptional activity. The chain is AP2-associated protein kinase 1 (Aak1) from Mus musculus (Mouse).